Reading from the N-terminus, the 409-residue chain is UV excision repair protein RAD23 homolog B (409 aa).

The region spanning 1 to 79 is the Ubiquitin-like domain; it reads MQVTLKTLQQ…VVVMVTKPKA (79 aa). A disordered region spans residues 80-175; the sequence is VSTPAPATTQ…STSGDSSRSN (96 aa). Residues 81-143 show a composition bias toward low complexity; sequence STPAPATTQQ…SSEPAPASAA (63 aa). Residues 144 to 153 show a composition bias toward basic and acidic residues; that stretch reads KQEKPAEKPA. Phosphothreonine is present on Thr155. Ser160 carries the post-translational modification Phosphoserine. Residues 160–175 are compositionally biased toward polar residues; sequence SPTATDSTSGDSSRSN. At Thr164 the chain carries Phosphothreonine. Ser174 carries the phosphoserine modification. Thr186 bears the Phosphothreonine mark. Positions 188 to 228 constitute a UBA 1 domain; the sequence is QSYENMVTEIMSMGYEREQVIAALRASFNNPDRAVEYLLMG. Phosphoserine is present on Ser199. Tyr202 is modified (phosphotyrosine). Residues 236–276 form a disordered region; the sequence is QAVVDPPQAASTGAPQSSAVAAAAATTTATTTTTSSGGHPL. The segment covering 252-271 has biased composition (low complexity); sequence SSAVAAAAATTTATTTTTSS. Residues 274-317 enclose the STI1 domain; it reads HPLEFLRNQPQFQQMRQIIQQNPSLLPALLQQIGRENPQLLQQI. Residues 364–404 form the UBA 2 domain; it reads PQEKEAIERLKALGFPEGLVIQAYFACEKNENLAANFLLQQ.

This sequence belongs to the RAD23 family. As to quaternary structure, component of the XPC complex composed of XPC, RAD23B and CETN2. Interacts with NGLY1 and PSMC1. Interacts with ATXN3. Interacts with PSMD4 and PSMC5. Interacts with AMFR. Interacts with VCP; the interaction is indirect and mediated by NGLY1.

It is found in the nucleus. It localises to the cytoplasm. In terms of biological role, multiubiquitin chain receptor involved in modulation of proteasomal degradation. Binds to polyubiquitin chains. Proposed to be capable to bind simultaneously to the 26S proteasome and to polyubiquitinated substrates and to deliver ubiquitinated proteins to the proteasome. May play a role in endoplasmic reticulum-associated degradation (ERAD) of misfolded glycoproteins by association with PNGase and delivering deglycosylated proteins to the proteasome. Its function is as follows. Involved in global genome nucleotide excision repair (GG-NER) by acting as component of the XPC complex. Cooperatively with CETN2 appears to stabilize XPC. May protect XPC from proteasomal degradation. The XPC complex is proposed to represent the first factor bound at the sites of DNA damage and together with other core recognition factors, XPA, RPA and the TFIIH complex, is part of the pre-incision (or initial recognition) complex. The XPC complex recognizes a wide spectrum of damaged DNA characterized by distortions of the DNA helix such as single-stranded loops, mismatched bubbles or single-stranded overhangs. The orientation of XPC complex binding appears to be crucial for inducing a productive NER. XPC complex is proposed to recognize and to interact with unpaired bases on the undamaged DNA strand which is followed by recruitment of the TFIIH complex and subsequent scanning for lesions in the opposite strand in a 5'-to-3' direction by the NER machinery. Cyclobutane pyrimidine dimers (CPDs) which are formed upon UV-induced DNA damage esacpe detection by the XPC complex due to a low degree of structural perurbation. Instead they are detected by the UV-DDB complex which in turn recruits and cooperates with the XPC complex in the respective DNA repair. In vitro, the XPC:RAD23B dimer is sufficient to initiate NER; it preferentially binds to cisplatin and UV-damaged double-stranded DNA and also binds to a variety of chemically and structurally diverse DNA adducts. XPC:RAD23B contacts DNA both 5' and 3' of a cisplatin lesion with a preference for the 5' side. XPC:RAD23B induces a bend in DNA upon binding. XPC:RAD23B stimulates the activity of DNA glycosylases TDG and SMUG1. This Homo sapiens (Human) protein is UV excision repair protein RAD23 homolog B (RAD23B).